Reading from the N-terminus, the 310-residue chain is Protein OS-9 homolog (310 aa).

Positions 1–40 (MFSSSMFPHLILPAIGSSKVRTMVLPFAFVGFFIFPICLA) are cleaved as a signal peptide. Residues asparagine 60, asparagine 97, and asparagine 104 are each glycosylated (N-linked (GlcNAc...) asparagine). Residues 129 to 255 (NVFLIENRGY…TIHVPGLCSL (127 aa)) form the MRH domain. A mannooligosaccharide derivative is bound by residues tryptophan 139 and glutamine 151. N-linked (GlcNAc...) asparagine glycosylation occurs at asparagine 204. Intrachain disulfides connect cysteine 208–cysteine 241 and cysteine 223–cysteine 253. Positions 209, 215, 237, and 243 each coordinate a mannooligosaccharide derivative. Basic and acidic residues-rich tracts occupy residues 282 to 292 (VDHKDSQHVVD) and 301 to 310 (EVKEVETQSS). The disordered stretch occupies residues 282 to 310 (VDHKDSQHVVDEVAQTSPPEVKEVETQSS).

Belongs to the OS-9 family. Interacts with missfolded ER lumenal proteins.

The protein resides in the endoplasmic reticulum membrane. In terms of biological role, lectin involved in the quality control of the secretory pathway. As a member of the endoplasmic reticulum-associated degradation lumenal (ERAD-L) surveillance system, targets misfolded endoplasmic reticulum lumenal glycoproteins for degradation. The protein is Protein OS-9 homolog (yos9) of Schizosaccharomyces pombe (strain 972 / ATCC 24843) (Fission yeast).